We begin with the raw amino-acid sequence, 473 residues long: MIKIYNTLTGHLDEFKPLKENEVSMYVCGPTVYNYIHIGNARPAIFFDTVRRYLEYRGYKVNYVQNFTDVDDKMINKANIENVSIKEIAERYIKAYFEDTSKINLKEEGMIRPKATENINEMIEIIQSLVDKGYAYESNGDVYFEVKKYRDGYGELSKQNIEDLESGARIDVNEIKRDALDFALWKASKPNEPSWDSPWGKGRPGWHIECSAMSRKYLGDSFDIHGGGLDLIFPHHENEMAQSKCGCGGTFAKYWMHNGYININGEKMSKSSGSFVLLRDILKYFEGRVIRLFVLGSHYRKPMEFSDTELNQTKSSLERIENTLKRIKELDRENIKGIDDCQELLATKKEMEAKFIEAMNEDFNTAQALGHIFELVKAVNKTLDEANISKKGLEVIDEVYSYLVMIIQDVLGVQLKLEVEVNNISADLIELILELRRNAREEKNWALSDKIRDRLLELGIKIKDGKDKTTWTM.

Cys-28 is a binding site for Zn(2+). The 'HIGH' region motif lies at 30–40 (PTVYNYIHIGN). Zn(2+) contacts are provided by Cys-210, His-235, and Glu-239. The 'KMSKS' region motif lies at 267 to 271 (KMSKS). Lys-270 provides a ligand contact to ATP.

This sequence belongs to the class-I aminoacyl-tRNA synthetase family. In terms of assembly, monomer. Zn(2+) serves as cofactor.

The protein resides in the cytoplasm. It carries out the reaction tRNA(Cys) + L-cysteine + ATP = L-cysteinyl-tRNA(Cys) + AMP + diphosphate. The polypeptide is Cysteine--tRNA ligase (Fusobacterium nucleatum subsp. nucleatum (strain ATCC 25586 / DSM 15643 / BCRC 10681 / CIP 101130 / JCM 8532 / KCTC 2640 / LMG 13131 / VPI 4355)).